A 487-amino-acid polypeptide reads, in one-letter code: Putative beta-glucosidase 35 (487 aa).

An N-terminal signal peptide occupies residues 1–27 (MGIRMGRRLLLITLLLGALLCNNVAYA). Gln-48 contributes to the a beta-D-glucoside binding site. Residues Asn-76 and Asn-116 are each glycosylated (N-linked (GlcNAc...) asparagine). A beta-D-glucoside-binding positions include His-151 and 200-201 (NE). Residue Glu-201 is the Proton donor of the active site. The cysteines at positions 220 and 228 are disulfide-linked. A beta-D-glucoside is bound at residue Tyr-344. Residue Asn-369 is glycosylated (N-linked (GlcNAc...) asparagine). Glu-414 provides a ligand contact to a beta-D-glucoside. Glu-414 (nucleophile) is an active-site residue. Asn-418 and Asn-419 each carry an N-linked (GlcNAc...) asparagine glycan. Position 458 (Phe-458) interacts with a beta-D-glucoside.

Belongs to the glycosyl hydrolase 1 family.

It catalyses the reaction Hydrolysis of terminal, non-reducing beta-D-glucosyl residues with release of beta-D-glucose.. The sequence is that of Putative beta-glucosidase 35 (BGLU35) from Oryza sativa subsp. japonica (Rice).